A 340-amino-acid polypeptide reads, in one-letter code: Large ribosomal subunit protein uL10 (340 aa).

Positions 305–340 (APQPAEEKVEEAEEEEEEEEEASEEEALAGLGALFG) are disordered. The span at 312-331 (KVEEAEEEEEEEEEASEEEA) shows a compositional bias: acidic residues.

The protein belongs to the universal ribosomal protein uL10 family. As to quaternary structure, part of the 50S ribosomal subunit. Forms part of the ribosomal stalk which helps the ribosome interact with GTP-bound translation factors. Forms a heptameric L10(L12)2(L12)2(L12)2 complex, where L10 forms an elongated spine to which the L12 dimers bind in a sequential fashion.

Forms part of the ribosomal stalk, playing a central role in the interaction of the ribosome with GTP-bound translation factors. The chain is Large ribosomal subunit protein uL10 from Thermococcus gammatolerans (strain DSM 15229 / JCM 11827 / EJ3).